Consider the following 114-residue polypeptide: Small nuclear ribonucleoprotein SmD1a (114 aa).

The 73-residue stretch at 2–74 (KLVRFLMKLN…IRYYILPDSL (73 aa)) folds into the Sm domain. Positions 87–114 (VKPKKPVAGKAVGRGRGRGRGRGRGRGR) are disordered. 8 tandem repeats follow at residues 99-100 (GR), 101-102 (GR), 103-104 (GR), 105-106 (GR), 107-108 (GR), 109-110 (GR), 111-112 (GR), and 113-114 (GR). An 8 X 2 AA tandem repeats of G-R region spans residues 99–114 (GRGRGRGRGRGRGRGR).

The protein belongs to the snRNP core protein family.

The protein resides in the nucleus. Its subcellular location is the nucleus speckle. The protein localises to the nucleolus. In terms of biological role, involved in splicing regulation. Facilitates post-transcriptional gene silencing (PTGS) by limiting the degradation of transgene aberrant RNAs by the RNA quality control (RQC) machinery, thus favoring their entry into cytoplasmic siRNA bodies where they can trigger PTGS. Does not participate in the production of small RNAs. The polypeptide is Small nuclear ribonucleoprotein SmD1a (Arabidopsis thaliana (Mouse-ear cress)).